The following is a 404-amino-acid chain: Argininosuccinate synthase (404 aa).

ATP is bound by residues 12-20 and Ala-39; that span reads AYSGGLDTS. L-citrulline-binding residues include Tyr-91 and Ser-96. An ATP-binding site is contributed by Gly-121. Residues Thr-123, Asn-127, and Asp-128 each contribute to the L-aspartate site. Asn-127 lines the L-citrulline pocket. L-citrulline is bound by residues Arg-131, Ser-180, Ser-189, Glu-265, and Tyr-277.

Belongs to the argininosuccinate synthase family. Type 1 subfamily. Homotetramer.

Its subcellular location is the cytoplasm. The enzyme catalyses L-citrulline + L-aspartate + ATP = 2-(N(omega)-L-arginino)succinate + AMP + diphosphate + H(+). It participates in amino-acid biosynthesis; L-arginine biosynthesis; L-arginine from L-ornithine and carbamoyl phosphate: step 2/3. In Vibrio cholerae serotype O1 (strain ATCC 39541 / Classical Ogawa 395 / O395), this protein is Argininosuccinate synthase.